The primary structure comprises 209 residues: Putative amino acid efflux protein YcgF (209 aa).

6 helical membrane passes run 1–21 (MNIF…VGPV), 39–59 (IFGL…YFGL), 62–82 (FLTA…VLTY), 110–130 (FASG…WLGI), 147–167 (LLIY…CMAI), and 184–204 (LTGI…YQGI).

The protein belongs to the Rht family.

It is found in the cell membrane. In Bacillus subtilis (strain 168), this protein is Putative amino acid efflux protein YcgF (ycgF).